Here is a 270-residue protein sequence, read N- to C-terminus: Small ribosomal subunit protein uS3 (270 aa).

A KH type-2 domain is found at 38–106; sequence IRQMLTRGME…QVQLNILEVK (69 aa). The tract at residues 212-270 is disordered; it reads EREAAQAAQRAAGPQRRERPGRRRRGGGGGGGQQQQQAEKATAQATEAAKAAKSGNEGS. Low complexity-rich tracts occupy residues 216 to 225 and 245 to 263; these read AQAAQRAAGP and QQQQAEKATAQATEAAKAA.

Belongs to the universal ribosomal protein uS3 family. Part of the 30S ribosomal subunit. Forms a tight complex with proteins S10 and S14.

In terms of biological role, binds the lower part of the 30S subunit head. Binds mRNA in the 70S ribosome, positioning it for translation. This is Small ribosomal subunit protein uS3 from Thermobifida fusca (strain YX).